Here is a 581-residue protein sequence, read N- to C-terminus: MTKPISLSNRALYARLLSYVRPYWKAVFLAVIGMVGTAATEPVFPAIMKYLLDNGFQAKDARMVWLIPMGIVTLFLVRSVIVYCTGYLMTWISSRLVTDLRRTMFAKLLALPTHHYDEHSAGQMISRLVYDVSNVTDAATSALITLVRESLTAIALIGYLLYLDWKLTLITLAIGPVIAFTVKSFSKRMRAASQKSLQAMRFISHTIEETISAQQVVKIFGGQERQQKQFFEATEQFRRAQMREAIPASAMTPITHIAASVAVAIIAFLALSQSTGQAGASAGSFISFITAMLMLISPVKQLATVNPTIQRGLAASESIFELLDAAQEDDRGKRQLLRSKGEICFDNVSLRYLGAERFALNDISFRITAGQTVALVGASGGGKSTISALIPRFYPVTSGRVLVDGIDINDITLASLRQNIALVSQNVILFNDTVGANIAYGSLQTCSRDDVIRAARAANAWDFIEQLPNGLDTPIGENGAKLSGGQRQRLAIARALLKDAPILILDEATSALDTESERQVQAALAVLMKNRTTLVIAHRLSTIEHADCILVLDQGRIVETGTHAELLRAGSYYANLSRLQG.

The next 5 membrane-spanning stretches (helical) occupy residues 27-47, 63-83, 154-174, 251-271, and 279-299; these read VFLA…FPAI, MVWL…VIVY, IALI…TLAI, MTPI…FLAL, and GASA…ISPV. Positions 28 to 311 constitute an ABC transmembrane type-1 domain; sequence FLAVIGMVGT…LATVNPTIQR (284 aa). Residues 343 to 579 enclose the ABC transporter domain; sequence ICFDNVSLRY…GSYYANLSRL (237 aa). 377 to 384 contributes to the ATP binding site; that stretch reads GASGGGKS.

Belongs to the ABC transporter superfamily. Lipid exporter (TC 3.A.1.106) family. Homodimer.

It localises to the cell inner membrane. The catalysed reaction is ATP + H2O + lipid A-core oligosaccharideSide 1 = ADP + phosphate + lipid A-core oligosaccharideSide 2.. Its function is as follows. Involved in lipopolysaccharide (LPS) biosynthesis. Translocates lipid A-core from the inner to the outer leaflet of the inner membrane. Transmembrane domains (TMD) form a pore in the inner membrane and the ATP-binding domain (NBD) is responsible for energy generation. In Albidiferax ferrireducens (strain ATCC BAA-621 / DSM 15236 / T118) (Rhodoferax ferrireducens), this protein is ATP-dependent lipid A-core flippase.